Consider the following 492-residue polypeptide: Probable beta-1,4-xylosyltransferase IRX14H (492 aa).

The Cytoplasmic portion of the chain corresponds to 1–33 (MKLSVFRLSYWNRRGSSFRSSPSLDPSFDGKSP). A helical; Signal-anchor for type II membrane protein transmembrane segment spans residues 34–54 (SSVFWFVIHGLCCLISLILGF). Over 55-492 (RFSHLVLFFL…FDGVKVSATS (438 aa)) the chain is Lumenal. 3 N-linked (GlcNAc...) asparagine glycosylation sites follow: Asn99, Asn196, and Asn314. The tract at residues 457–492 (IKEAKSNSKPRVSKSKSYKEKQEPKAFDGVKVSATS) is disordered. Residues 473-484 (SYKEKQEPKAFD) are compositionally biased toward basic and acidic residues.

It belongs to the glycosyltransferase 43 family. In terms of tissue distribution, expressed in developing interfascicular fibers and xylem cells in stems and developing secondary xylem in roots.

It is found in the golgi apparatus membrane. Its function is as follows. Involved in the synthesis of the hemicellulose glucuronoxylan, a major component of secondary cell walls. Probably involved in the elongation of glucuronoxylan xylosyl backbone. In Arabidopsis thaliana (Mouse-ear cress), this protein is Probable beta-1,4-xylosyltransferase IRX14H (IRX14H).